The primary structure comprises 251 residues: Uroporphyrinogen-III C-methyltransferase (251 aa).

S-adenosyl-L-homocysteine contacts are provided by residues Pro-17, 93–95 (GGD), 123–124 (TS), Met-177, and Ala-206.

The protein belongs to the precorrin methyltransferase family.

It localises to the plastid. The protein localises to the chloroplast. It carries out the reaction uroporphyrinogen III + 2 S-adenosyl-L-methionine = precorrin-2 + 2 S-adenosyl-L-homocysteine + H(+). It participates in cofactor biosynthesis; adenosylcobalamin biosynthesis; precorrin-2 from uroporphyrinogen III: step 1/1. The protein operates within porphyrin-containing compound metabolism; siroheme biosynthesis; precorrin-2 from uroporphyrinogen III: step 1/1. Functionally, catalyzes the two successive C-2 and C-7 methylation reactions involved in the conversion of uroporphyrinogen III to precorrin-2 via the intermediate formation of precorrin-1. It is a step in the biosynthesis of both cobalamin (vitamin B12) and siroheme. This is Uroporphyrinogen-III C-methyltransferase (cobA) from Cyanidium caldarium (Red alga).